The sequence spans 466 residues: Alpha-1A adrenergic receptor (466 aa).

Topologically, residues 1–27 are extracellular; sequence MVLLSENASEGSNCTHPPAPVNISKAI. 3 N-linked (GlcNAc...) asparagine glycosylation sites follow: Asn7, Asn13, and Asn22. The chain crosses the membrane as a helical span at residues 28–51; that stretch reads LLGVILGGLIIFGVLGNILVILSV. Topologically, residues 52–64 are cytoplasmic; it reads ACHRHLHSVTHYY. A helical transmembrane segment spans residues 65 to 88; the sequence is IVNLAVADLLLTSTVLPFSAIFEI. Over 89–99 the chain is Extracellular; the sequence is LGYWAFGRVFC. Residues Cys99 and Cys176 are joined by a disulfide bond. A helical transmembrane segment spans residues 100–122; it reads NIWAAVDVLCCTASIMGLCIISI. The Cytoplasmic segment spans residues 123-143; sequence DRYIGVSYPLRYPTIVTQRRG. The chain crosses the membrane as a helical span at residues 144 to 167; the sequence is VRALLCVWVLSLVISIGPLFGWRQ. At 168–181 the chain is on the extracellular side; sequence PAPEDETICQINEE. Residues 182 to 205 traverse the membrane as a helical segment; sequence PGYVLFSALGSFYVPLAIILVMYC. Residues 206-273 are Cytoplasmic-facing; the sequence is RVYVVAKRES…FSREKKAAKT (68 aa). Ser215 is subject to Phosphoserine; by PKA. A helical transmembrane segment spans residues 274–297; that stretch reads LGIVVGCFVLCWLPFFLVMPIGSF. The Extracellular segment spans residues 298–305; sequence FPDFKPSE. A helical membrane pass occupies residues 306 to 329; it reads TVFKIVFWLGYLNSCINPIIYPCS. The Cytoplasmic portion of the chain corresponds to 330-466; it reads SQEFKKAFQN…ISLGENGEEV (137 aa). The Nuclear localization signal motif lies at 334–349; sequence KKAFQNVLRIQCLRRR. A lipid anchor (S-palmitoyl cysteine) is attached at Cys345.

Belongs to the G-protein coupled receptor 1 family. Adrenergic receptor subfamily. ADRA1A sub-subfamily. Homo- and heterooligomer. Heterooligomerizes with ADRA1B homooligomers in cardiac myocytes. Interacts with CAVIN4. C-terminal Ser or Thr residues may be phosphorylated. Abundant in heart, brain, aorta, vena cava, vas deferens, submaxillary gland, lung, and kidney. Found at lower levels in prostate, parotid gland and skeletal muscle.

The protein resides in the nucleus membrane. It localises to the cell membrane. It is found in the cytoplasm. Its subcellular location is the membrane. The protein localises to the caveola. This alpha-adrenergic receptor mediates its action by association with G proteins that activate a phosphatidylinositol-calcium second messenger system. Its effect is mediated by G(q) and G(11) proteins. Nuclear ADRA1A-ADRA1B heterooligomers regulate phenylephrine (PE)-stimulated ERK signaling in cardiac myocytes. This is Alpha-1A adrenergic receptor (Adra1a) from Rattus norvegicus (Rat).